The primary structure comprises 76 residues: Acyl carrier protein (76 aa).

One can recognise a Carrier domain in the interval 1 to 76; sequence MSIEERVKKI…SAIDYVQNNQ (76 aa). Ser-36 is subject to O-(pantetheine 4'-phosphoryl)serine.

The protein belongs to the acyl carrier protein (ACP) family. 4'-phosphopantetheine is transferred from CoA to a specific serine of apo-ACP by AcpS. This modification is essential for activity because fatty acids are bound in thioester linkage to the sulfhydryl of the prosthetic group.

It is found in the cytoplasm. Its pathway is lipid metabolism; fatty acid biosynthesis. Functionally, carrier of the growing fatty acid chain in fatty acid biosynthesis. This Histophilus somni (strain 129Pt) (Haemophilus somnus) protein is Acyl carrier protein.